Here is a 340-residue protein sequence, read N- to C-terminus: Cathepsin S (340 aa).

Positions 1–17 (MRAPGHAAIRWLFWMPL) are cleaved as a signal peptide. The propeptide at 18–122 (VCSVAMEQLQ…VTFRSYSNRT (105 aa)) is activation peptide. N120 carries N-linked (GlcNAc...) asparagine glycosylation. Disulfide bonds link C134-C233, C144-C189, C178-C222, and C281-C329. The active site involves C147. Catalysis depends on residues H287 and N307.

This sequence belongs to the peptidase C1 family. In terms of tissue distribution, widely expressed with highest expression found in non-skeletal tissues. Relatively high levels found in skeletal tissues. Expressed in spleen, B cells, dendritic cells and macrophages.

It localises to the lysosome. Its subcellular location is the secreted. The protein resides in the cytoplasmic vesicle. It is found in the phagosome. It carries out the reaction Similar to cathepsin L, but with much less activity on Z-Phe-Arg-|-NHMec, and more activity on the Z-Val-Val-Arg-|-Xaa compound.. Its function is as follows. Thiol protease. Key protease responsible for the removal of the invariant chain from MHC class II molecules and MHC class II antigen presentation. The bond-specificity of this proteinase is in part similar to the specificities of cathepsin L. The chain is Cathepsin S (Ctss) from Mus musculus (Mouse).